A 155-amino-acid polypeptide reads, in one-letter code: Ribosomal RNA large subunit methyltransferase H (155 aa).

S-adenosyl-L-methionine contacts are provided by residues Leu-72, Gly-103, and 122–127 (LSDLTL).

Belongs to the RNA methyltransferase RlmH family. As to quaternary structure, homodimer.

Its subcellular location is the cytoplasm. It carries out the reaction pseudouridine(1915) in 23S rRNA + S-adenosyl-L-methionine = N(3)-methylpseudouridine(1915) in 23S rRNA + S-adenosyl-L-homocysteine + H(+). In terms of biological role, specifically methylates the pseudouridine at position 1915 (m3Psi1915) in 23S rRNA. The protein is Ribosomal RNA large subunit methyltransferase H of Paracidovorax citrulli (strain AAC00-1) (Acidovorax citrulli).